The primary structure comprises 97 residues: Apolipoprotein C-II (97 aa).

An N-terminal signal peptide occupies residues 1 to 22; that stretch reads MGSRFFLALFLVLLVLGNEVQG. The tract at residues 63 to 71 is lipid binding; sequence SVDEKLRDM. The tract at residues 75–97 is lipoprotein lipase cofactor; that stretch reads SSAAMSTYAGIFTDQLLTLLKGE.

The protein belongs to the apolipoprotein C2 family. In terms of processing, proapolipoprotein C-II is synthesized as a sialic acid containing glycoprotein which is subsequently desialylated prior to its proteolytic processing. Proapolipoprotein C-II, the major form found in plasma undergoes proteolytic cleavage of its N-terminal hexapeptide to generate the mature form apolipoprotein C-II, which occurs as the minor form in plasma.

It localises to the secreted. Its function is as follows. Component of chylomicrons, very low-density lipoproteins (VLDL), low-density lipoproteins (LDL), and high-density lipoproteins (HDL) in plasma. Plays an important role in lipoprotein metabolism as an activator of lipoprotein lipase. The chain is Apolipoprotein C-II (Apoc2) from Grammomys surdaster (African woodland thicket rat).